A 413-amino-acid polypeptide reads, in one-letter code: Serine hydroxymethyltransferase (413 aa).

(6S)-5,6,7,8-tetrahydrofolate-binding positions include Leu117 and 121 to 123 (GHL). At Lys226 the chain carries N6-(pyridoxal phosphate)lysine. Residues Glu239 and 349–351 (SPF) each bind (6S)-5,6,7,8-tetrahydrofolate.

It belongs to the SHMT family. In terms of assembly, homodimer. Pyridoxal 5'-phosphate serves as cofactor.

Its subcellular location is the cytoplasm. It catalyses the reaction (6R)-5,10-methylene-5,6,7,8-tetrahydrofolate + glycine + H2O = (6S)-5,6,7,8-tetrahydrofolate + L-serine. The protein operates within one-carbon metabolism; tetrahydrofolate interconversion. It functions in the pathway amino-acid biosynthesis; glycine biosynthesis; glycine from L-serine: step 1/1. Functionally, catalyzes the reversible interconversion of serine and glycine with tetrahydrofolate (THF) serving as the one-carbon carrier. This reaction serves as the major source of one-carbon groups required for the biosynthesis of purines, thymidylate, methionine, and other important biomolecules. Also exhibits THF-independent aldolase activity toward beta-hydroxyamino acids, producing glycine and aldehydes, via a retro-aldol mechanism. The polypeptide is Serine hydroxymethyltransferase (Bacillus mycoides (strain KBAB4) (Bacillus weihenstephanensis)).